Reading from the N-terminus, the 631-residue chain is tRNA uridine 5-carboxymethylaminomethyl modification enzyme MnmG (631 aa).

Gly-14–Gly-19 contacts FAD. Gly-274–Phe-288 is an NAD(+) binding site.

It belongs to the MnmG family. Homodimer. Heterotetramer of two MnmE and two MnmG subunits. The cofactor is FAD.

It is found in the cytoplasm. NAD-binding protein involved in the addition of a carboxymethylaminomethyl (cmnm) group at the wobble position (U34) of certain tRNAs, forming tRNA-cmnm(5)s(2)U34. This is tRNA uridine 5-carboxymethylaminomethyl modification enzyme MnmG from Pseudomonas paraeruginosa (strain DSM 24068 / PA7) (Pseudomonas aeruginosa (strain PA7)).